Here is a 253-residue protein sequence, read N- to C-terminus: MRILVTNDDGIHAPGLKVLEEIARELSDDVWVVAPETDQSGVSHSLSLNDPLRLRRVAETRFAVKGTPSDCVIMGVRHILKERGPDLVLSGVNRGQNVAEDVTYSGTVAGAMEGTILGVRSIALSQAYGVGGRANVKWHTAAEHGARTIRRILEAGIEPGILVNVNFPDCEPEAVEGIAVVAQGMRNQQLLAIDERLDGRGNPYFWLAFAKARFEPGHGTDLKAIAENRIAVTPLRLDLTDEPTLTRFAQVFG.

A divalent metal cation-binding residues include Asp-8, Asp-9, Ser-40, and Asn-93.

The protein belongs to the SurE nucleotidase family. A divalent metal cation is required as a cofactor.

It localises to the cytoplasm. It carries out the reaction a ribonucleoside 5'-phosphate + H2O = a ribonucleoside + phosphate. Its function is as follows. Nucleotidase that shows phosphatase activity on nucleoside 5'-monophosphates. In Methylobacterium nodulans (strain LMG 21967 / CNCM I-2342 / ORS 2060), this protein is 5'-nucleotidase SurE.